Reading from the N-terminus, the 347-residue chain is Major capsid protein (347 aa).

Belongs to the baculoviridae major capsid protein family.

Its subcellular location is the virion. Functionally, most abundant structural protein of the nucleocapsid produced during the infection cycle. The monomers are arranged in stacked rings around the nucleoprotein core. The chain is Major capsid protein (P39) from Autographa californica nuclear polyhedrosis virus (AcMNPV).